The primary structure comprises 260 residues: uncharacterized protein (260 aa).

The N-terminal stretch at 1–22 (MKSIKRIGLCISLLILIIFATS) is a signal peptide. The N-palmitoyl cysteine moiety is linked to residue Cys-23. Cys-23 carries S-diacylglycerol cysteine lipidation.

The protein belongs to the staphylococcal tandem lipoprotein family.

The protein localises to the cell membrane. This is an uncharacterized protein from Staphylococcus aureus (strain N315).